The primary structure comprises 236 residues: Syntaxin-8 (236 aa).

Over 1–215 (MAPDPWFSTY…LVDRKSASCG (215 aa)) the chain is Cytoplasmic. Positions 42 to 65 (LTIRTLLKNLKVKIDLLKDLLLRA) form a coiled coil. Phosphoserine occurs at positions 102 and 160. Positions 145–207 (QKIIQEQDAG…RTEARRVTLV (63 aa)) constitute a t-SNARE coiled-coil homology domain. A helical; Anchor for type IV membrane protein membrane pass occupies residues 216 to 232 (MIMVILLLLVAIVVVAV). At 233–236 (WPTN) the chain is on the vesicular side.

It belongs to the syntaxin family. Part of the SNARE core complex containing STX7, VAMP8 and VTI1B. Interacts with VAMP8. Forms a SNARE complex with STX7, VTI1B and VAMP8 which functions in the homotypic fusion of late endosomes. Component of the SNARE complex composed of STX7, STX8, VAMP7 and VTI1B that is required for heterotypic fusion of late endosomes with lysosomes. Interacts with HECTD3. Interacts with TPC1. Post-translationally, ubiquitinated by HECTD3. As to expression, widely expressed in all tissues examined.

It localises to the membrane. Its function is as follows. Vesicle trafficking protein that functions in the early secretory pathway, possibly by mediating retrograde transport from cis-Golgi membranes to the ER. The polypeptide is Syntaxin-8 (Stx8) (Rattus norvegicus (Rat)).